Here is an 87-residue protein sequence, read N- to C-terminus: Lipid-anchored plasma membrane protein uvi15 (87 aa).

The tract at residues 1 to 64 (MSAQQFYGDK…MYVQQPQASD (64 aa)) is disordered. The segment covering 18 to 41 (QQAYGGPNYYPPQQNYPQQGYAPP) has biased composition (low complexity).

The protein belongs to the CYSTM1 family. In terms of processing, palmitoylated.

It localises to the cell membrane. The protein localises to the cell tip. Required for the maintenance of viability of cells in stationary phase and in starvation conditions. This is Lipid-anchored plasma membrane protein uvi15 (uvi15) from Schizosaccharomyces pombe (strain 972 / ATCC 24843) (Fission yeast).